We begin with the raw amino-acid sequence, 179 residues long: Large ribosomal subunit protein uL5 (179 aa).

The protein belongs to the universal ribosomal protein uL5 family. Part of the 50S ribosomal subunit; part of the 5S rRNA/L5/L18/L25 subcomplex. Contacts the 5S rRNA and the P site tRNA. Forms a bridge to the 30S subunit in the 70S ribosome.

Its function is as follows. This is one of the proteins that bind and probably mediate the attachment of the 5S RNA into the large ribosomal subunit, where it forms part of the central protuberance. In the 70S ribosome it contacts protein S13 of the 30S subunit (bridge B1b), connecting the 2 subunits; this bridge is implicated in subunit movement. Contacts the P site tRNA; the 5S rRNA and some of its associated proteins might help stabilize positioning of ribosome-bound tRNAs. The protein is Large ribosomal subunit protein uL5 of Rickettsia akari (strain Hartford).